Reading from the N-terminus, the 228-residue chain is Small ribosomal subunit protein uS3 (228 aa).

The region spanning 39-107 is the KH type-2 domain; it reads VREYLQDKLK…PVHINIEEIR (69 aa).

This sequence belongs to the universal ribosomal protein uS3 family. In terms of assembly, part of the 30S ribosomal subunit. Forms a tight complex with proteins S10 and S14.

Functionally, binds the lower part of the 30S subunit head. Binds mRNA in the 70S ribosome, positioning it for translation. This Pseudomonas fluorescens (strain ATCC BAA-477 / NRRL B-23932 / Pf-5) protein is Small ribosomal subunit protein uS3.